A 239-amino-acid polypeptide reads, in one-letter code: EF-hand domain-containing protein D2 (239 aa).

The disordered stretch occupies residues 1–51 (MATDELASKLSRRLQMEDEGGEATEQPGLNGAAAAAAEAPDETAQALGSAD). Ala2 carries the N-acetylalanine modification. Ser11 is subject to Phosphoserine. Residues 32 to 46 (AAAAAAEAPDETAQA) are compositionally biased toward low complexity. Residues Ser73 and Ser75 each carry the phosphoserine modification. A Phosphotyrosine modification is found at Tyr82. EF-hand domains are found at residues 91 to 126 (KQIK…LGAP) and 127 to 162 (QTHL…AAAG). Ca(2+) contacts are provided by Asp104, Asp108, Glu115, Asp140, Asp142, Asp144, Lys146, and Glu151. Lys232 is modified (N6-acetyllysine).

As to quaternary structure, interacts with CASP9; with inactive form.

It localises to the membrane raft. May regulate B-cell receptor (BCR)-induced immature and primary B-cell apoptosis. Plays a role as negative regulator of the canonical NF-kappa-B-activating branch. Controls spontaneous apoptosis through the regulation of BCL2L1 abundance. This chain is EF-hand domain-containing protein D2 (Efhd2), found in Rattus norvegicus (Rat).